A 168-amino-acid chain; its full sequence is ATP synthase subunit b (168 aa).

A helical membrane pass occupies residues 10-30 (STILGNFILVTASFAVLIILI).

Belongs to the ATPase B chain family. As to quaternary structure, F-type ATPases have 2 components, F(1) - the catalytic core - and F(0) - the membrane proton channel. F(1) has five subunits: alpha(3), beta(3), gamma(1), delta(1), epsilon(1). F(0) has three main subunits: a(1), b(2) and c(10-14). The alpha and beta chains form an alternating ring which encloses part of the gamma chain. F(1) is attached to F(0) by a central stalk formed by the gamma and epsilon chains, while a peripheral stalk is formed by the delta and b chains.

Its subcellular location is the cell membrane. Its function is as follows. F(1)F(0) ATP synthase produces ATP from ADP in the presence of a proton or sodium gradient. F-type ATPases consist of two structural domains, F(1) containing the extramembraneous catalytic core and F(0) containing the membrane proton channel, linked together by a central stalk and a peripheral stalk. During catalysis, ATP synthesis in the catalytic domain of F(1) is coupled via a rotary mechanism of the central stalk subunits to proton translocation. Component of the F(0) channel, it forms part of the peripheral stalk, linking F(1) to F(0). This chain is ATP synthase subunit b, found in Streptococcus suis (strain 98HAH33).